The chain runs to 1367 residues: Insulin-like growth factor 1 receptor (1367 aa).

The N-terminal stretch at Met1–Gly30 is a signal peptide. Cys33 and Cys52 form a disulfide bridge. Asn51, Asn102, and Asn135 each carry an N-linked (GlcNAc...) asparagine glycan. Intrachain disulfides connect Cys150/Cys178, Cys182/Cys205, Cys192/Cys211, Cys215/Cys224, Cys219/Cys230, Cys231/Cys239, Cys235/Cys248, Cys251/Cys260, Cys264/Cys276, Cys282/Cys303, Cys307/Cys321, Cys324/Cys328, and Cys332/Cys353. N-linked (GlcNAc...) asparagine glycosylation occurs at Asn244. An N-linked (GlcNAc...) asparagine glycan is attached at Asn314. N-linked (GlcNAc...) asparagine glycosylation is found at Asn417 and Asn438. An intrachain disulfide couples Cys455 to Cys488. Fibronectin type-III domains lie at Asp491–Ser609, Val610–Glu708, Pro735–Ala828, and Ile834–Lys927. Asn534, Asn607, Asn622, Asn640, Asn747, Asn756, Asn764, Asn900, and Asn913 each carry an N-linked (GlcNAc...) asparagine glycan. At Asp741–His935 the chain is on the extracellular side. A helical transmembrane segment spans residues Leu936–His959. Topologically, residues Arg960–Cys1367 are cytoplasmic. Positions Asn977–Tyr980 match the IRS1- and SHC1-binding motif. Residue Tyr980 is modified to Phosphotyrosine. The 276-residue stretch at Ile999–Phe1274 folds into the Protein kinase domain. ATP-binding positions include Leu1005 to Val1013 and Lys1033. Asp1135 (proton acceptor) is an active-site residue. Phosphotyrosine; by autocatalysis occurs at positions 1161, 1165, and 1166. Residues Lys1168 and Lys1171 each participate in a glycyl lysine isopeptide (Lys-Gly) (interchain with G-Cter in ubiquitin) cross-link. Residue Ser1278 is modified to Phosphoserine; by GSK3-beta. Ser1282 is modified (phosphoserine). The segment at Pro1288–Cys1367 is disordered. The segment covering Pro1290–Asn1299 has biased composition (acidic residues). The span at Met1300–Leu1316 shows a compositional bias: low complexity. Positions Pro1317–Glu1326 are enriched in basic and acidic residues.

This sequence belongs to the protein kinase superfamily. Tyr protein kinase family. Insulin receptor subfamily. In terms of assembly, tetramer of 2 alpha and 2 beta chains linked by disulfide bonds. The alpha chains contribute to the formation of the ligand-binding domain, while the beta chain carries the kinase domain. Interacts with PIK3R1 and with the PTB/PID domains of IRS1 and SHC1 in vitro when autophosphorylated on tyrosine residues. Forms a hybrid receptor with INSR, the hybrid is a tetramer consisting of 1 alpha chain and 1 beta chain of INSR and 1 alpha chain and 1 beta chain of IGF1R. Interacts with ARRB1 and ARRB2. Interacts with GRB10. Interacts with RACK1. Interacts with SOCS1, SOCS2 and SOCS3. Interacts with 14-3-3 proteins. Interacts with NMD2. Interacts with MAP3K5. Interacts with STAT3. Found in a ternary complex with IGF1 and ITGAV:ITGB3 or ITGA6:ITGB4. Interacts (nascent precursor form) with ZFAND2B. As to quaternary structure, (Microbial infection) Interacts with human respiratory syncytial virus (HRSV) fusion glycoprotein F1/F2 heterodimer. In terms of processing, autophosphorylated on tyrosine residues in response to ligand binding. Autophosphorylation occurs in trans, i.e. one subunit of the dimeric receptor phosphorylates tyrosine residues on the other subunit. Autophosphorylation occurs in a sequential manner; Tyr-1165 is predominantly phosphorylated first, followed by phosphorylation of Tyr-1161 and Tyr-1166. While every single phosphorylation increases kinase activity, all three tyrosine residues in the kinase activation loop (Tyr-1165, Tyr-1161 and Tyr-1166) have to be phosphorylated for optimal activity. Can be autophosphorylated at additional tyrosine residues (in vitro). Autophosphorylated is followed by phosphorylation of juxtamembrane tyrosines and C-terminal serines. May also be phosphorylated at Tyr-1161 and Tyr-1166 by mTORC2. Phosphorylation of Tyr-980 is required for IRS1- and SHC1-binding. Phosphorylation of Ser-1278 by GSK-3beta restrains kinase activity and promotes cell surface expression, it requires a priming phosphorylation at Ser-1282. Dephosphorylated by PTPN1. Post-translationally, polyubiquitinated at Lys-1168 and Lys-1171 through both 'Lys-48' and 'Lys-29' linkages, promoting receptor endocytosis and subsequent degradation by the proteasome. Ubiquitination is facilitated by pre-existing phosphorylation. Sumoylated with SUMO1. In terms of processing, controlled by regulated intramembrane proteolysis (RIP). Undergoes metalloprotease-dependent constitutive ectodomain shedding to produce a membrane-anchored 52 kDa C-Terminal fragment which is further processed by presenilin gamma-secretase to yield an intracellular 50 kDa fragment. As to expression, found as a hybrid receptor with INSR in muscle, heart, kidney, adipose tissue, skeletal muscle, hepatoma, fibroblasts, spleen and placenta (at protein level). Expressed in a variety of tissues. Overexpressed in tumors, including melanomas, cancers of the colon, pancreas prostate and kidney.

It localises to the cell membrane. It catalyses the reaction L-tyrosyl-[protein] + ATP = O-phospho-L-tyrosyl-[protein] + ADP + H(+). Its activity is regulated as follows. Activated by autophosphorylation at Tyr-1165, Tyr-1161 and Tyr-1166 on the kinase activation loop; phosphorylation at all three tyrosine residues is required for optimal kinase activity. Inhibited by MSC1609119A-1, BMS-754807, PQIP, benzimidazole pyridinone, isoquinolinedione, bis-azaindole, 3-cyanoquinoline, 2,4-bis-arylamino-1,3-pyrimidine, pyrrolopyrimidine, pyrrole-5-carboxaldehyde, picropodophyllin (PPP), tyrphostin derivatives. While most inhibitors bind to the ATP binding pocket, MSC1609119A-1 functions as allosteric inhibitor and binds close to the DFG motif and the activation loop. Its function is as follows. Receptor tyrosine kinase which mediates actions of insulin-like growth factor 1 (IGF1). Binds IGF1 with high affinity and IGF2 and insulin (INS) with a lower affinity. The activated IGF1R is involved in cell growth and survival control. IGF1R is crucial for tumor transformation and survival of malignant cell. Ligand binding activates the receptor kinase, leading to receptor autophosphorylation, and tyrosines phosphorylation of multiple substrates, that function as signaling adapter proteins including, the insulin-receptor substrates (IRS1/2), Shc and 14-3-3 proteins. Phosphorylation of IRSs proteins lead to the activation of two main signaling pathways: the PI3K-AKT/PKB pathway and the Ras-MAPK pathway. The result of activating the MAPK pathway is increased cellular proliferation, whereas activating the PI3K pathway inhibits apoptosis and stimulates protein synthesis. Phosphorylated IRS1 can activate the 85 kDa regulatory subunit of PI3K (PIK3R1), leading to activation of several downstream substrates, including protein AKT/PKB. AKT phosphorylation, in turn, enhances protein synthesis through mTOR activation and triggers the antiapoptotic effects of IGFIR through phosphorylation and inactivation of BAD. In parallel to PI3K-driven signaling, recruitment of Grb2/SOS by phosphorylated IRS1 or Shc leads to recruitment of Ras and activation of the ras-MAPK pathway. In addition to these two main signaling pathways IGF1R signals also through the Janus kinase/signal transducer and activator of transcription pathway (JAK/STAT). Phosphorylation of JAK proteins can lead to phosphorylation/activation of signal transducers and activators of transcription (STAT) proteins. In particular activation of STAT3, may be essential for the transforming activity of IGF1R. The JAK/STAT pathway activates gene transcription and may be responsible for the transforming activity. JNK kinases can also be activated by the IGF1R. IGF1 exerts inhibiting activities on JNK activation via phosphorylation and inhibition of MAP3K5/ASK1, which is able to directly associate with the IGF1R. In terms of biological role, when present in a hybrid receptor with INSR, binds IGF1. PubMed:12138094 shows that hybrid receptors composed of IGF1R and INSR isoform Long are activated with a high affinity by IGF1, with low affinity by IGF2 and not significantly activated by insulin, and that hybrid receptors composed of IGF1R and INSR isoform Short are activated by IGF1, IGF2 and insulin. In contrast, PubMed:16831875 shows that hybrid receptors composed of IGF1R and INSR isoform Long and hybrid receptors composed of IGF1R and INSR isoform Short have similar binding characteristics, both bind IGF1 and have a low affinity for insulin. This chain is Insulin-like growth factor 1 receptor (IGF1R), found in Homo sapiens (Human).